The sequence spans 141 residues: ATP synthase epsilon chain 1 (141 aa).

Belongs to the ATPase epsilon chain family. F-type ATPases have 2 components, CF(1) - the catalytic core - and CF(0) - the membrane proton channel. CF(1) has five subunits: alpha(3), beta(3), gamma(1), delta(1), epsilon(1). CF(0) has three main subunits: a, b and c.

It localises to the cell inner membrane. In terms of biological role, produces ATP from ADP in the presence of a proton gradient across the membrane. The protein is ATP synthase epsilon chain 1 of Thiobacillus denitrificans (strain ATCC 25259 / T1).